The chain runs to 448 residues: MGSCLSSSGGGGSRRSLHGSPHVPGPGRRKRPPKRRPGSCSSSFDNTEEPLLHRIPGRMFLNGSTDTVSLFSQQGKKGPNQDAMIVWENFGSMEDTVFCGVFDGHGPYGHIVAKRVRDLLPLKLGSHLESYVSPEEVLKEISLNTDDRKISEDLVHISANGESRVYNKDYVKDQDMIQMLIGSIVKAYRFMDKELKMQVDVDCFCSGTTAVTMVKQGQHLVIGNIGDSRAVLGVRNKDNKLVPFQLTEDLKPDVPAEAERIKRCRGRIFALRDEPGVARLWLPNHNSPGLAMARAFGDFCLKDFGLISVPDVSYRRLTEKDEFVVLATDGIWDALTNEEVVKIVAKAPTRSSAGRALVEAAVRNWRWKFPTSKVDDCAVVCLFLDSEPNRLSTASFSKEKHINNGVTEPEPDTASSSTPDSGTGSPELNGVNRIDTLVNLPVYVPTKE.

The disordered stretch occupies residues 1 to 48 (MGSCLSSSGGGGSRRSLHGSPHVPGPGRRKRPPKRRPGSCSSSFDNTE). The N-myristoyl glycine moiety is linked to residue Gly-2. Over residues 27–37 (GRRKRPPKRRP) the composition is skewed to basic residues. One can recognise a PPM-type phosphatase domain in the interval 67–384 (TVSLFSQQGK…DDCAVVCLFL (318 aa)). Mn(2+)-binding residues include Asp-103, Gly-104, Asp-329, and Asp-375. The segment at 401-431 (HINNGVTEPEPDTASSSTPDSGTGSPELNGV) is disordered. A compositionally biased stretch (low complexity) spans 412-426 (DTASSSTPDSGTGSP).

The protein belongs to the PP2C family. Interacts with KIN10. It depends on Mg(2+) as a cofactor. Requires Mn(2+) as cofactor. As to expression, expressed in the whole plant.

It localises to the cell membrane. It catalyses the reaction O-phospho-L-seryl-[protein] + H2O = L-seryl-[protein] + phosphate. The enzyme catalyses O-phospho-L-threonyl-[protein] + H2O = L-threonyl-[protein] + phosphate. In terms of biological role, acts as a protein phosphatase. The sequence is that of Probable protein phosphatase 2C 74 from Arabidopsis thaliana (Mouse-ear cress).